The following is a 67-amino-acid chain: Ferredoxin FdxE (67 aa).

Residues cysteine 10, valine 11, glutamine 15, cysteine 16, and cysteine 54 each coordinate [3Fe-4S] cluster.

Interacts with the cytochrome P450 143 with high affinity (Kd=84 nM). Requires [3Fe-4S] cluster as cofactor.

In terms of biological role, ferredoxin that is the redox partner of cytochrome CYP143, a cytochrome P450 encoded by an adjacent gene. In Mycobacterium tuberculosis (strain ATCC 25618 / H37Rv), this protein is Ferredoxin FdxE.